We begin with the raw amino-acid sequence, 281 residues long: Bis(5'-nucleosyl)-tetraphosphatase, symmetrical (281 aa).

This sequence belongs to the Ap4A hydrolase family.

It carries out the reaction P(1),P(4)-bis(5'-adenosyl) tetraphosphate + H2O = 2 ADP + 2 H(+). Hydrolyzes diadenosine 5',5'''-P1,P4-tetraphosphate to yield ADP. The chain is Bis(5'-nucleosyl)-tetraphosphatase, symmetrical from Pectobacterium carotovorum subsp. carotovorum (strain PC1).